The primary structure comprises 129 residues: Large ribosomal subunit protein bL20 (129 aa).

This sequence belongs to the bacterial ribosomal protein bL20 family.

Its function is as follows. Binds directly to 23S ribosomal RNA and is necessary for the in vitro assembly process of the 50S ribosomal subunit. It is not involved in the protein synthesizing functions of that subunit. This is Large ribosomal subunit protein bL20 from Mycolicibacterium smegmatis (strain ATCC 700084 / mc(2)155) (Mycobacterium smegmatis).